The primary structure comprises 347 residues: Selenide, water dikinase (347 aa).

Cysteine 17 is an active-site residue. Residues lysine 20 and 48–50 (TRD) each bind ATP. Aspartate 51 is a Mg(2+) binding site. ATP contacts are provided by residues aspartate 68, aspartate 91, and 139 to 141 (GHS). Aspartate 91 contacts Mg(2+). Aspartate 227 provides a ligand contact to Mg(2+).

This sequence belongs to the selenophosphate synthase 1 family. Class I subfamily. As to quaternary structure, homodimer. Mg(2+) is required as a cofactor.

The enzyme catalyses hydrogenselenide + ATP + H2O = selenophosphate + AMP + phosphate + 2 H(+). Its function is as follows. Synthesizes selenophosphate from selenide and ATP. This is Selenide, water dikinase from Escherichia coli O9:H4 (strain HS).